We begin with the raw amino-acid sequence, 152 residues long: UPF0225 protein YchJ (152 aa).

This sequence belongs to the UPF0225 family.

This chain is UPF0225 protein YchJ (ychJ), found in Salmonella typhimurium (strain LT2 / SGSC1412 / ATCC 700720).